The primary structure comprises 230 residues: uncharacterized protein (230 aa).

Residues 2-230 form the ABC transporter domain; the sequence is IQLSNVRKSY…ASSGQRSVGE (229 aa). An ATP-binding site is contributed by 38–45; that stretch reads GPSGSGKS.

It belongs to the ABC transporter superfamily. As to quaternary structure, part of a complex composed of YknX, YknY and YknZ. The complex interacts with YknW.

The protein resides in the cell membrane. Functionally, part of an unusual four-component transporter, which is required for protection against the killing factor SdpC (sporulation-delaying protein). This is an uncharacterized protein from Bacillus subtilis (strain 168).